Here is a 446-residue protein sequence, read N- to C-terminus: Tripartite motif-containing protein 43C (446 aa).

The RING-type zinc finger occupies 16–57 (CSICQGIFMDPVYLRCGHKFCETCLLLFQEDIKFPAYCPTCR). The B box-type zinc finger occupies 88-129 (SEEHKCVTHKAKKMIFCDKSKILLCHLCSDSQEHSGHTHCSI). Cysteine 93, histidine 96, cysteine 115, and histidine 121 together coordinate Zn(2+). The B30.2/SPRY domain maps to 271-446 (RLRAHSIPGL…VRPFFFAAYT (176 aa)).

It belongs to the TRIM/RBCC family.

This Mus musculus (Mouse) protein is Tripartite motif-containing protein 43C.